The following is a 313-amino-acid chain: Alpha/beta-gliadin clone PW8142 (313 aa).

The first 20 residues, 1 to 20 (MKTFLILALVATTATTAVRV), serve as a signal peptide directing secretion. Positions 22 to 55 (VPQLQPKNPSQQQPQEQVPLVQQQQFPGQQQQFP) are enriched in low complexity. Disordered stretches follow at residues 22–122 (VPQL…QQAQ) and 234–272 (QQPSSQVSFQQPQQQYPSSQGSFQPSQQNPQAQGSVQPQ). Pro residues-rich tracts occupy residues 56-68 (PQQPYPQPQPFPS) and 78-101 (FPQPQPFLPQLPYPQPQSFPPQQP). 2 stretches are compositionally biased toward low complexity: residues 102–122 (YPQQRPKYLQPQQPISQQQAQ) and 234–264 (QQPSSQVSFQQPQQQYPSSQGSFQPSQQNPQ).

This sequence belongs to the gliadin/glutenin family. Substrate of transglutaminase.

In terms of biological role, gliadin is the major seed storage protein in wheat. In Triticum aestivum (Wheat), this protein is Alpha/beta-gliadin clone PW8142.